The sequence spans 2435 residues: Highly reducing polyketide synthase ATR6 (2435 aa).

The region spanning 18–450 (AEPIAIVSAA…GSNAHVVLDN (433 aa)) is the Ketosynthase family 3 (KS3) domain. Catalysis depends on for beta-ketoacyl synthase activity residues cysteine 192, histidine 331, and histidine 371. Positions 586-883 (FVFTGQGAQW…EIGPSAALGG (298 aa)) are malonyl-CoA:ACP transacylase (MAT) domain. Serine 682 functions as the For malonyltransferase activity in the catalytic mechanism. Residues 979-1125 (HDLLGGKVLG…GLVRLALNAS (147 aa)) are N-terminal hotdog fold. A dehydratase (DH) domain region spans residues 979–1291 (HDLLGGKVLG…LRGISMTSVG (313 aa)). In terms of domain architecture, PKS/mFAS DH spans 979–1296 (HDLLGGKVLG…MTSVGLQGNV (318 aa)). Histidine 1011 acts as the For beta-hydroxyacyl dehydratase activity in catalysis. Positions 1141–1296 (QYPTPARFWY…MTSVGLQGNV (156 aa)) are C-terminal hotdog fold. Positions 1724–2037 (GILDTLHFAE…DHNRLRNVVI (314 aa)) are enoylreductase (ER) domain. Residues 2062–2301 (PEQTYLLVGK…ITGIAVPQPG (240 aa)) form a catalytic ketoreductase (KRc) domain region. Residues 2353–2429 (VLLSSAVGVL…VLCQKIISRM (77 aa)) enclose the Carrier domain. An O-(pantetheine 4'-phosphoryl)serine modification is found at serine 2389.

It participates in mycotoxin biosynthesis. In terms of biological role, highly reducing polyketide synthase; part of the core atranone cluster (CAC) which products are predicted to catalyze most or all steps of mycotoxin atranone synthesis, starting from geranylgeranyl pyrophosphate (GGPP). The initial cyclization of GGPP to dolabellane is probably performed by the terpene cyclase ATR13. The Baeyer-Villiger oxidation near the end of the atranone synthesis, which converts atranones D and E to atranones F and G is predicted to be catalyzed by the monooxygenase ATR8. Of the CAC's other predicted gene products, the reducing PKS ATR6 might synthesize a polyketide chain. This polyketide is probably transferred onto the atranone backbone by the polyketide transferase ATR5. Other predicted CAC products include 4 oxygenases (ATR2, ATR3, ATR4, and ATR14), 3 short-chain reductases (ATR7, ATR9, and ATR10), and a methyltransferase (ATR12). These may all be involved in the various steps of atranone biosynthesis, although their specific roles must await experimental determination. The chain is Highly reducing polyketide synthase ATR6 from Stachybotrys chlorohalonatus (strain IBT 40285).